Reading from the N-terminus, the 122-residue chain is Putative MOB kinase activator-like 2B (122 aa).

Positions 69 and 74 each coordinate Zn(2+).

Belongs to the MOB1/phocein family.

It localises to the nucleus. The protein localises to the cytoplasm. The protein resides in the cytoskeleton. It is found in the phragmoplast. In Arabidopsis thaliana (Mouse-ear cress), this protein is Putative MOB kinase activator-like 2B.